We begin with the raw amino-acid sequence, 128 residues long: Head peptide (128 aa).

A signal peptide spans 1 to 22 (MWKFASIVVLVVCLAWAVYCED). The residue at position 23 (Gln23) is a Pyrrolidone carboxylic acid. A Hydroxyproline; partial modification is found at Pro26. The interval 27–128 (SLKTRFGRSA…GRANKKRAAN (102 aa)) is disordered. At Phe32 the chain carries Phenylalanine amide. The propeptide occupies 35 to 55 (SADEPESDNYVSNDIMEKRSA). Pyrrolidone carboxylic acid is present on Gln56. Position 59 is a hydroxyproline; partial (Pro59). Phe65 carries the post-translational modification Phenylalanine amide. Over residues 66 to 78 (GRSEGAEVMEKRS) the composition is skewed to basic and acidic residues. Positions 68 to 79 (SEGAEVMEKRSA) are excised as a propeptide. At Gln80 the chain carries Pyrrolidone carboxylic acid. Pro83 carries the hydroxyproline; partial modification. At Phe89 the chain carries Phenylalanine amide. The propeptide occupies 92–128 (SVANPESDGYMRKRSAESEPFVTRIRHGRANKKRAAN). The span at 115-128 (RIRHGRANKKRAAN) shows a compositional bias: basic residues.

This sequence belongs to the NPY family. In terms of tissue distribution, expressed in the brain, terminal ganglion, and midgut of adults: numerous neurosecretory cells and midgut endocrine cells. Expression is dynamic depending on reproductive cycle.

It is found in the secreted. Its function is as follows. Has a role in inhibiting host-seeking behavior during a reproductive cycle. This chain is Head peptide, found in Aedes aegypti (Yellowfever mosquito).